We begin with the raw amino-acid sequence, 328 residues long: MCHQQLVISWFSLVFLASPLMAIWELKKDVYVVELDWYPDAPGEMVVLTCDTPEEDGITWTLDQSGEVLGSGKTLTIQVKEFGDAGQYTCHKGGEALSHSLLLLHKKEDGIWSTDVLKDQKEPKNKTFLRCEAKNYSGRFTCWWLTTISTDLTFSVKSSRGSSNPQGVTCGAVTLSAERVRGDNKEYEYSVECQEDSACPAAEERLPIEVMVDAIHKLKYENYTSSFFIRDIIKPDPPKNLQLKPLKNSRQVEVSWEYPDTWSTPHSYFSLTFCIQVQGKSKREKKDRIFTDKTSATVICRKNASFSVQAQDRYYSSSWSEWASVPCS.

A signal peptide spans 1-22 (MCHQQLVISWFSLVFLASPLMA). Residues 29–106 (DVYVVELDWY…LSHSLLLLHK (78 aa)) form the Ig-like C2-type domain. C50 and C90 are joined by a disulfide. Residues N125, N135, and N222 are each glycosylated (N-linked (GlcNAc...) asparagine). Residues 237-328 (PPKNLQLKPL…WSEWASVPCS (92 aa)) form the Fibronectin type-III domain.

This sequence belongs to the IL-12B family. Heterodimer with IL12A; disulfide-linked. The heterodimer is known as interleukin IL-12. Heterodimer with IL23A; disulfide-linked. The heterodimer is known as interleukin IL-23. Also secreted as a monomer. Interacts with NBR1; this interaction promotes IL-12 secretion.

The protein localises to the secreted. Functionally, cytokine that can act as a growth factor for activated T and NK cells, enhance the lytic activity of NK/lymphokine-activated killer cells, and stimulate the production of IFN-gamma by resting PBMC. Associates with IL23A to form the IL-23 interleukin, a heterodimeric cytokine which functions in innate and adaptive immunity. IL-23 may constitute with IL-17 an acute response to infection in peripheral tissues. IL-23 binds to a heterodimeric receptor complex composed of IL12RB1 and IL23R, activates the Jak-Stat signaling cascade, stimulates memory rather than naive T-cells and promotes production of pro-inflammatory cytokines. IL-23 induces autoimmune inflammation and thus may be responsible for autoimmune inflammatory diseases and may be important for tumorigenesis. This chain is Interleukin-12 subunit beta (IL12B), found in Macaca mulatta (Rhesus macaque).